We begin with the raw amino-acid sequence, 448 residues long: Phosphoglucosamine mutase (448 aa).

S102 acts as the Phosphoserine intermediate in catalysis. Mg(2+)-binding residues include S102, D241, D243, and D245. Phosphoserine is present on S102.

It belongs to the phosphohexose mutase family. It depends on Mg(2+) as a cofactor. Post-translationally, activated by phosphorylation.

It catalyses the reaction alpha-D-glucosamine 1-phosphate = D-glucosamine 6-phosphate. Its function is as follows. Catalyzes the conversion of glucosamine-6-phosphate to glucosamine-1-phosphate. This is Phosphoglucosamine mutase from Ruegeria pomeroyi (strain ATCC 700808 / DSM 15171 / DSS-3) (Silicibacter pomeroyi).